Reading from the N-terminus, the 276-residue chain is Diaminopimelate epimerase (276 aa).

Substrate is bound by residues asparagine 13, glutamine 46, and asparagine 66. The active-site Proton donor is the cysteine 75. Substrate is bound by residues 76–77, asparagine 159, asparagine 192, and 210–211; these read GN and ER. Cysteine 219 functions as the Proton acceptor in the catalytic mechanism. 220–221 provides a ligand contact to substrate; it reads GT.

The protein belongs to the diaminopimelate epimerase family. Homodimer.

It localises to the cytoplasm. The catalysed reaction is (2S,6S)-2,6-diaminopimelate = meso-2,6-diaminopimelate. It functions in the pathway amino-acid biosynthesis; L-lysine biosynthesis via DAP pathway; DL-2,6-diaminopimelate from LL-2,6-diaminopimelate: step 1/1. Catalyzes the stereoinversion of LL-2,6-diaminopimelate (L,L-DAP) to meso-diaminopimelate (meso-DAP), a precursor of L-lysine and an essential component of the bacterial peptidoglycan. The polypeptide is Diaminopimelate epimerase (Pseudomonas syringae pv. tomato (strain ATCC BAA-871 / DC3000)).